We begin with the raw amino-acid sequence, 293 residues long: Elongation factor Ts (293 aa).

The involved in Mg(2+) ion dislocation from EF-Tu stretch occupies residues 79–82 (TDFV). At S149 the chain carries Phosphoserine.

The protein belongs to the EF-Ts family.

It localises to the cytoplasm. In terms of biological role, associates with the EF-Tu.GDP complex and induces the exchange of GDP to GTP. It remains bound to the aminoacyl-tRNA.EF-Tu.GTP complex up to the GTP hydrolysis stage on the ribosome. This is Elongation factor Ts (tsf) from Bacillus subtilis (strain 168).